The primary structure comprises 462 residues: Ammonium transporter Rh type B (462 aa).

Residues 1-11 (MTDPSTNMRLK) lie on the Cytoplasmic side of the membrane. The chain crosses the membrane as a helical span at residues 12 to 32 (LPITCFILQIILIILFGVLVQ). Over 33 to 62 (YDEDTDAKKHHHGNHSESKSDIENDFYYRY) the chain is Extracellular. A glycan (N-linked (GlcNAc...) asparagine) is linked at asparagine 46. The chain crosses the membrane as a helical span at residues 63 to 83 (PSFQDVHVMIFVGFGFLMTFL). The Cytoplasmic segment spans residues 84–94 (QRYGFSSVGFN). A helical transmembrane segment spans residues 95-115 (FLIAAFSLQWATLMQGFFHGL). At 116 to 125 (HEGKIHIGVE) the chain is on the extracellular side. A helical membrane pass occupies residues 126 to 146 (SMINADFCTGSVLISFGAVLG). At 147–152 (KTSPVQ) the chain is on the cytoplasmic side. A helical transmembrane segment spans residues 153–173 (LLFMAVFEVTLFAVNEFILLT). Over 174-180 (LLGTKDA) the chain is Extracellular. A helical transmembrane segment spans residues 181 to 201 (GGSMTIHTFGAYFGLMVTRIL). Residues 202–220 (YRPNLDKSKHKNCSVYHSD) lie on the Cytoplasmic side of the membrane. The chain crosses the membrane as a helical span at residues 221-241 (LFAMIGTLYLWMFWPSFNSAV). The Extracellular segment spans residues 242–302 (TEHGDPQHRT…VAAGTAGEMM (61 aa)). The helical transmembrane segment at 303 to 323 (LTPFGSMIVGFLAGIISVLGF) threads the bilayer. The Cytoplasmic segment spans residues 324-344 (KYLTPILENKLKIQDTCGIHN). The helical transmembrane segment at 345-365 (LHGMPGVLGAIVGAVTASLAS) threads the bilayer. Topologically, residues 366 to 395 (KEVYGEGLEKVFPDVASGKRTASDQGGVQA) are extracellular. The helical transmembrane segment at 396 to 416 (ISLAVTLGMALFGGLIVGFIL) threads the bilayer. The Cytoplasmic segment spans residues 417–462 (KLPIFGAPRDTTCFEDSLYWEVPGEEESHEDQLTTVKTEESDKLNS). The disordered stretch occupies residues 441 to 462 (EEESHEDQLTTVKTEESDKLNS). Over residues 453 to 462 (KTEESDKLNS) the composition is skewed to basic and acidic residues.

The protein belongs to the ammonium transporter (TC 2.A.49) family. Rh subfamily.

It localises to the basolateral cell membrane. The protein localises to the cytoplasmic vesicle membrane. In terms of biological role, functions as an ammonia transporter. May play a role in the elimination of ammonia in the gill. The polypeptide is Ammonium transporter Rh type B (rhbg) (Oryzias latipes (Japanese rice fish)).